Here is a 126-residue protein sequence, read N- to C-terminus: Histone H2B type 1-J (126 aa).

The span at 1-12 (MPEPAKSAPAPK) shows a compositional bias: low complexity. The interval 1 to 35 (MPEPAKSAPAPKKGSKKAVTKAQKKDGKKRKRSRK) is disordered. Pro-2 is subject to N-acetylproline. At Glu-3 the chain carries ADP-ribosyl glutamic acid. Lys-6 is modified (N6-(2-hydroxyisobutyryl)lysine; alternate). Lys-6 carries the N6-(beta-hydroxybutyryl)lysine; alternate modification. Lys-6 carries the post-translational modification N6-acetyllysine; alternate. Lys-6 is subject to N6-butyryllysine; alternate. An N6-crotonyllysine; alternate modification is found at Lys-6. The residue at position 6 (Lys-6) is an N6-lactoyllysine; alternate. Residue Lys-6 forms a Glycyl lysine isopeptide (Lys-Gly) (interchain with G-Cter in SUMO2); alternate linkage. The residue at position 7 (Ser-7) is an ADP-ribosylserine. Lys-12 is modified (N6-(beta-hydroxybutyryl)lysine; alternate). N6-acetyllysine; alternate occurs at positions 12 and 13. Residues Lys-12 and Lys-13 each carry the N6-crotonyllysine; alternate modification. Lys-12 is modified (N6-lactoyllysine; alternate). At Lys-13 the chain carries N6-(2-hydroxyisobutyryl)lysine; alternate. Ser-15 is modified (phosphoserine; by STK4/MST1). 4 positions are modified to N6-acetyllysine; alternate: Lys-16, Lys-17, Lys-21, and Lys-24. An N6-crotonyllysine; alternate mark is found at Lys-16, Lys-17, Lys-21, and Lys-24. Residues Lys-16, Lys-17, Lys-21, and Lys-24 each carry the N6-lactoyllysine; alternate modification. Lys-17 and Lys-21 each carry N6-(beta-hydroxybutyryl)lysine; alternate. Lys-17 is subject to N6-glutaryllysine; alternate. N6-(2-hydroxyisobutyryl)lysine; alternate occurs at positions 21 and 24. The residue at position 21 (Lys-21) is an N6-butyryllysine; alternate. A Glycyl lysine isopeptide (Lys-Gly) (interchain with G-Cter in SUMO2); alternate cross-link involves residue Lys-21. N6-(2-hydroxyisobutyryl)lysine is present on Lys-25. An N6-(2-hydroxyisobutyryl)lysine; alternate modification is found at Lys-35. Lys-35 carries the post-translational modification N6-(beta-hydroxybutyryl)lysine; alternate. An N6-crotonyllysine; alternate modification is found at Lys-35. Lys-35 carries the N6-glutaryllysine; alternate modification. Lys-35 is modified (N6-succinyllysine; alternate). Lys-35 is covalently cross-linked (Glycyl lysine isopeptide (Lys-Gly) (interchain with G-Cter in ubiquitin); alternate). Glu-36 carries the polyADP-ribosyl glutamic acid modification. Ser-37 carries the post-translational modification Phosphoserine; by AMPK. N6-(2-hydroxyisobutyryl)lysine; alternate is present on residues Lys-44, Lys-47, and Lys-58. Residue Lys-44 is modified to N6-lactoyllysine; alternate. N6-glutaryllysine; alternate is present on residues Lys-44 and Lys-47. An N6-methyllysine; alternate modification is found at Lys-47. Residue Lys-58 is modified to N6,N6-dimethyllysine; alternate. At Arg-80 the chain carries Dimethylated arginine. Lys-86 carries the post-translational modification N6-(2-hydroxyisobutyryl)lysine; alternate. At Lys-86 the chain carries N6-(beta-hydroxybutyryl)lysine; alternate. Lys-86 carries the N6-acetyllysine; alternate modification. Lys-86 bears the N6-lactoyllysine; alternate mark. Lys-86 carries the N6,N6,N6-trimethyllysine; alternate modification. Residues Arg-87 and Arg-93 each carry the omega-N-methylarginine modification. Lys-109 is subject to N6-(2-hydroxyisobutyryl)lysine; alternate. Lys-109 carries the N6-lactoyllysine; alternate modification. N6-glutaryllysine; alternate is present on Lys-109. At Lys-109 the chain carries N6-methyllysine; alternate. An O-linked (GlcNAc) serine glycan is attached at Ser-113. A Phosphothreonine modification is found at Thr-116. An N6-(2-hydroxyisobutyryl)lysine; alternate mark is found at Lys-117 and Lys-121. Residues Lys-117 and Lys-121 each carry the N6-(beta-hydroxybutyryl)lysine; alternate modification. Residues Lys-117 and Lys-121 each carry the N6-lactoyllysine; alternate modification. N6-glutaryllysine; alternate occurs at positions 117 and 121. N6-succinyllysine; alternate occurs at positions 117 and 121. The residue at position 117 (Lys-117) is an N6-malonyllysine; alternate. Position 117 is an N6-methylated lysine; alternate (Lys-117). Lys-121 participates in a covalent cross-link: Glycyl lysine isopeptide (Lys-Gly) (interchain with G-Cter in ubiquitin); alternate.

This sequence belongs to the histone H2B family. The nucleosome is a histone octamer containing two molecules each of H2A, H2B, H3 and H4 assembled in one H3-H4 heterotetramer and two H2A-H2B heterodimers. The octamer wraps approximately 147 bp of DNA. Heterodimer H2BC11 and H2AZ1 interacts with VPS72 (via N-terminal domain). Monoubiquitination at Lys-35 (H2BK34Ub) by the MSL1/MSL2 dimer is required for histone H3 'Lys-4' (H3K4me) and 'Lys-79' (H3K79me) methylation and transcription activation at specific gene loci, such as HOXA9 and MEIS1 loci. Similarly, monoubiquitination at Lys-121 (H2BK120Ub) by the RNF20/40 complex gives a specific tag for epigenetic transcriptional activation and is also prerequisite for histone H3 'Lys-4' and 'Lys-79' methylation. It also functions cooperatively with the FACT dimer to stimulate elongation by RNA polymerase II. H2BK120Ub also acts as a regulator of mRNA splicing: deubiquitination by USP49 is required for efficient cotranscriptional splicing of a large set of exons. Post-translationally, phosphorylation at Ser-37 (H2BS36ph) by AMPK in response to stress promotes transcription. Phosphorylated on Ser-15 (H2BS14ph) by STK4/MST1 during apoptosis; which facilitates apoptotic chromatin condensation. Also phosphorylated on Ser-15 in response to DNA double strand breaks (DSBs), and in correlation with somatic hypermutation and immunoglobulin class-switch recombination. In terms of processing, glcNAcylation at Ser-113 promotes monoubiquitination of Lys-121. It fluctuates in response to extracellular glucose, and associates with transcribed genes. ADP-ribosylated by PARP1 or PARP2 on Ser-7 (H2BS6ADPr) in response to DNA damage. H2BS6ADPr promotes recruitment of CHD1L. Mono-ADP-ribosylated on Glu-3 (H2BE2ADPr) by PARP3 in response to single-strand breaks. Poly ADP-ribosylation on Glu-36 (H2BE35ADPr) by PARP1 regulates adipogenesis: it inhibits phosphorylation at Ser-37 (H2BS36ph), thereby blocking expression of pro-adipogenetic genes. Post-translationally, crotonylation (Kcr) is specifically present in male germ cells and marks testis-specific genes in post-meiotic cells, including X-linked genes that escape sex chromosome inactivation in haploid cells. Crotonylation marks active promoters and enhancers and confers resistance to transcriptional repressors. It is also associated with post-meiotically activated genes on autosomes. In terms of processing, lactylated in macrophages by EP300/P300 by using lactoyl-CoA directly derived from endogenous or exogenous lactate, leading to stimulates gene transcription.

Its subcellular location is the nucleus. It localises to the chromosome. Its function is as follows. Core component of nucleosome. Nucleosomes wrap and compact DNA into chromatin, limiting DNA accessibility to the cellular machineries which require DNA as a template. Histones thereby play a central role in transcription regulation, DNA repair, DNA replication and chromosomal stability. DNA accessibility is regulated via a complex set of post-translational modifications of histones, also called histone code, and nucleosome remodeling. In terms of biological role, has broad antibacterial activity. May contribute to the formation of the functional antimicrobial barrier of the colonic epithelium, and to the bactericidal activity of amniotic fluid. The polypeptide is Histone H2B type 1-J (Homo sapiens (Human)).